Here is a 257-residue protein sequence, read N- to C-terminus: Protein YIPF5 (257 aa).

The Cytoplasmic portion of the chain corresponds to 1–124; it reads MSGFDNFNTD…KASDGSIMNE (124 aa). The helical transmembrane segment at 125 to 145 threads the bilayer; it reads TDLAGPMVFCLAFGATLLLTG. Lysine 146 is a topological domain (lumenal). A helical membrane pass occupies residues 147 to 167; that stretch reads IQFGYVYGISAIGCLGMYCLL. The Cytoplasmic portion of the chain corresponds to 168–173; sequence NLMSMT. Residues 174–194 form a helical membrane-spanning segment; sequence GVSFGCVASVLGYCLLPMIIL. The Lumenal portion of the chain corresponds to 195–196; it reads SS. A helical membrane pass occupies residues 197–217; it reads FGVIFSLQGIMGIILTAAIIG. Residues 218 to 236 lie on the Cytoplasmic side of the membrane; the sequence is WCSLSASKIFISALAMDGQ. The helical transmembrane segment at 237–257 threads the bilayer; sequence QLLVAYPCALLYGVFALISVF.

This sequence belongs to the YIP1 family.

It localises to the endoplasmic reticulum membrane. It is found in the golgi apparatus. Its subcellular location is the cis-Golgi network membrane. Its function is as follows. Plays a role in transport between endoplasmic reticulum and Golgi. The protein is Protein YIPF5 (yipf5) of Danio rerio (Zebrafish).